The chain runs to 336 residues: Vacuolar protein sorting-associated protein 26B (336 aa).

Phosphoserine occurs at positions 302, 304, and 319.

It belongs to the VPS26 family. Component of the heterotrimeric retromer cargo-selective complex (CSC), also described as vacuolar protein sorting VPS subcomplex (VPS,) formed by VPS26 (VPS26A or VPS26B), VPS29 and VPS35. The CSC has a highly elongated structure with VPS26 and VPS29 binding independently at opposite distal ends of VPS35 as central platform. The CSC is believed to associate with variable sorting nexins to form functionally distinct retromer complex variants. The originally described retromer complex (also called SNX-BAR retromer) is a pentamer containing the CSC and a heterodimeric membrane-deforming subcomplex formed between SNX1 or SNX2 and SNX5 or SNX6 (also called SNX-BAR subcomplex); the respective CSC and SNX-BAR subcomplexes associate with low affinity. The CSC associates with SNX3 to form a SNX3-retromer complex. The CSC associates with SNX27, the WASH complex and the SNX-BAR subcomplex to form the SNX27-retromer complex. Interacts with VPS29, VPS35, TBC1D5, GOLPH3, SNX27.

The protein resides in the cytoplasm. It is found in the membrane. The protein localises to the early endosome. It localises to the late endosome. Its function is as follows. Acts as a component of the retromer cargo-selective complex (CSC). The CSC is believed to be the core functional component of retromer or respective retromer complex variants acting to prevent missorting of selected transmembrane cargo proteins into the lysosomal degradation pathway. The recruitment of the CSC to the endosomal membrane involves RAB7A and SNX3. The SNX-BAR retromer mediates retrograde transport of cargo proteins from endosomes to the trans-Golgi network (TGN) and is involved in endosome-to-plasma membrane transport for cargo protein recycling. The SNX3-retromer mediates the retrograde transport of WLS distinct from the SNX-BAR retromer pathway. The SNX27-retromer is believed to be involved in endosome-to-plasma membrane trafficking and recycling of a broad spectrum of cargo proteins. The CSC seems to act as recruitment hub for other proteins, such as the WASH complex and TBC1D5. May be involved in retrograde transport of SORT1 but not of IGF2R. Acts redundantly with VSP26A in SNX-27 mediated endocytic recycling of SLC2A1/GLUT1. This is Vacuolar protein sorting-associated protein 26B (VPS26B) from Homo sapiens (Human).